We begin with the raw amino-acid sequence, 108 residues long: Large ribosomal subunit protein bL21 (108 aa).

The protein belongs to the bacterial ribosomal protein bL21 family. In terms of assembly, part of the 50S ribosomal subunit. Contacts protein L20.

This protein binds to 23S rRNA in the presence of protein L20. This chain is Large ribosomal subunit protein bL21, found in Acidobacterium capsulatum (strain ATCC 51196 / DSM 11244 / BCRC 80197 / JCM 7670 / NBRC 15755 / NCIMB 13165 / 161).